The primary structure comprises 188 residues: Putative pre-16S rRNA nuclease (188 aa).

The tract at residues 156-188 (LRQGDAAPGGSDDERDEDGDTDGEDGGGDGGGE) is disordered. The span at 166–188 (SDDERDEDGDTDGEDGGGDGGGE) shows a compositional bias: acidic residues.

The protein belongs to the YqgF nuclease family.

It is found in the cytoplasm. Its function is as follows. Could be a nuclease involved in processing of the 5'-end of pre-16S rRNA. This chain is Putative pre-16S rRNA nuclease, found in Rhodospirillum centenum (strain ATCC 51521 / SW).